We begin with the raw amino-acid sequence, 562 residues long: Bacillolysin (562 aa).

An N-terminal signal peptide occupies residues 1–24 (MKKKKQALKVLLSVGILSSSFAFA). Positions 25–245 (HTSSAAPNNV…KQAAKPAAKP (221 aa)) are cleaved as a propeptide — activation peptide. Residues Asp-303, Asp-305, and Asp-384 each coordinate Ca(2+). Residue His-388 coordinates Zn(2+). Glu-389 is an active-site residue. Zn(2+)-binding residues include His-392 and Glu-412. Ca(2+)-binding residues include Glu-423, Asn-429, Asp-431, Glu-433, Glu-436, Tyr-439, Thr-440, and Asp-446. His-477 serves as the catalytic Proton donor.

It belongs to the peptidase M4 family. Ca(2+) is required as a cofactor. The cofactor is Zn(2+).

The protein localises to the secreted. It carries out the reaction Similar, but not identical, to that of thermolysin.. Its function is as follows. Extracellular zinc metalloprotease. In Priestia megaterium (strain ATCC 14581 / DSM 32 / CCUG 1817 / JCM 2506 / NBRC 15308 / NCIMB 9376 / NCTC 10342 / NRRL B-14308 / VKM B-512 / Ford 19) (Bacillus megaterium), this protein is Bacillolysin.